The primary structure comprises 128 residues: Putative pre-16S rRNA nuclease (128 aa).

It belongs to the YqgF nuclease family.

Its subcellular location is the cytoplasm. In terms of biological role, could be a nuclease involved in processing of the 5'-end of pre-16S rRNA. This Sulfurovum sp. (strain NBC37-1) protein is Putative pre-16S rRNA nuclease.